The chain runs to 500 residues: Tektin-like protein 1 (500 aa).

The disordered stretch occupies residues 1–25; that stretch reads MPVLLPSTDRDQDSRVGAPEWHQAA. At serine 14 the chain carries Phosphoserine. Residues 198–229 adopt a coiled-coil conformation; that stretch reads MLVWEREELKSMKRKMEKDMERSEALLKALAS. Residues 265-286 are disordered; the sequence is VDITRPPTPRTQGLKTPPPDPV. A Phosphotyrosine modification is found at tyrosine 372. Residues 422 to 448 are a coiled coil; the sequence is LTRHNLQMEKNLKELRTTHDNLAWSLN.

As to quaternary structure, microtubule inner protein component of sperm flagellar doublet microtubules.

The protein localises to the cytoplasm. The protein resides in the cytoskeleton. It localises to the flagellum axoneme. In terms of biological role, microtubule inner protein (MIP) part of the dynein-decorated doublet microtubules (DMTs) in sperm flagellar axoneme, which is required for motile flagellum beating. Forms an extensive interaction network cross-linking the lumen of axonemal doublet microtubules. This is Tektin-like protein 1 from Rattus norvegicus (Rat).